The following is a 319-amino-acid chain: Lipoyl synthase (319 aa).

The disordered stretch occupies residues 1–29 (MVVVVDTVSDKPIRPRHPEKAARPDALSP). Basic and acidic residues predominate over residues 8–29 (VSDKPIRPRHPEKAARPDALSP). [4Fe-4S] cluster-binding residues include cysteine 61, cysteine 66, cysteine 72, cysteine 87, cysteine 91, cysteine 94, and serine 300. In terms of domain architecture, Radical SAM core spans 73-289 (WDRKHATFMI…ESLAYAKGFL (217 aa)).

The protein belongs to the radical SAM superfamily. Lipoyl synthase family. [4Fe-4S] cluster serves as cofactor.

The protein resides in the cytoplasm. The enzyme catalyses [[Fe-S] cluster scaffold protein carrying a second [4Fe-4S](2+) cluster] + N(6)-octanoyl-L-lysyl-[protein] + 2 oxidized [2Fe-2S]-[ferredoxin] + 2 S-adenosyl-L-methionine + 4 H(+) = [[Fe-S] cluster scaffold protein] + N(6)-[(R)-dihydrolipoyl]-L-lysyl-[protein] + 4 Fe(3+) + 2 hydrogen sulfide + 2 5'-deoxyadenosine + 2 L-methionine + 2 reduced [2Fe-2S]-[ferredoxin]. Its pathway is protein modification; protein lipoylation via endogenous pathway; protein N(6)-(lipoyl)lysine from octanoyl-[acyl-carrier-protein]: step 2/2. Its function is as follows. Catalyzes the radical-mediated insertion of two sulfur atoms into the C-6 and C-8 positions of the octanoyl moiety bound to the lipoyl domains of lipoate-dependent enzymes, thereby converting the octanoylated domains into lipoylated derivatives. The protein is Lipoyl synthase of Rhodopseudomonas palustris (strain BisA53).